The sequence spans 501 residues: 4,4'-diapophytoene desaturase (4,4'-diaponeurosporene-forming) (501 aa).

5–17 is an FAD binding site; it reads VVGAGVTGLAAAA.

It belongs to the carotenoid/retinoid oxidoreductase family. CrtN subfamily.

It catalyses the reaction 15-cis-4,4'-diapophytoene + 3 FAD + 3 H(+) = all-trans-4,4'-diaponeurosporene + 3 FADH2. Its pathway is carotenoid biosynthesis; staphyloxanthin biosynthesis; staphyloxanthin from farnesyl diphosphate: step 2/5. Functionally, involved in the biosynthesis of the yellow-orange carotenoid staphyloxanthin, which plays a role in the virulence via its protective function against oxidative stress. Catalyzes three successive dehydrogenation reactions that lead to the introduction of three double bonds into 4,4'-diapophytoene (dehydrosqualene), with 4,4'-diapophytofluene and 4,4'-diapo-zeta-carotene as intermediates, and 4,4'-diaponeurosporene (the major deep-yellow pigment in staphylococci strains) as the end product. The protein is 4,4'-diapophytoene desaturase (4,4'-diaponeurosporene-forming) of Staphylococcus haemolyticus (strain JCSC1435).